Here is a 373-residue protein sequence, read N- to C-terminus: P2Y purinoceptor 1 (373 aa).

The Extracellular portion of the chain corresponds to 1 to 51 (MTEVPWSAVPNGTDAAFLAGLGSLWGNSTIASTAAVSSSFRCALIKTGFQF). N-linked (GlcNAc...) asparagine glycans are attached at residues Asn-11 and Asn-27. 2 disulfide bridges follow: Cys-42/Cys-296 and Cys-124/Cys-202. Lys-46 is an ADP binding site. Residues 52 to 74 (YYLPAVYILVFIIGFLGNSVAIW) form a helical membrane-spanning segment. Residues 75 to 87 (MFVFHMKPWSGIS) are Cytoplasmic-facing. The chain crosses the membrane as a helical span at residues 88–109 (VYMFNLALADFLYVLTLPALIF). The Extracellular segment spans residues 110–125 (YYFNKTDWIFGDVMCK). Asn-113 carries N-linked (GlcNAc...) asparagine glycosylation. Residues 126 to 147 (LQRFIFHVNLYGSILFLTCISA) traverse the membrane as a helical segment. The Cytoplasmic segment spans residues 148 to 166 (HRYSGVVYPLKSLGRLKKK). A helical membrane pass occupies residues 167-188 (NAIYVSVLVWLIVVVAISPILF). Over 189–214 (YSGTGIRKNKTVTCYDSTSDEYLRSY) the chain is Extracellular. The N-linked (GlcNAc...) asparagine glycan is linked to Asn-197. 203 to 205 (YDS) is an ADP binding site. The chain crosses the membrane as a helical span at residues 215-237 (FIYSMCTTVAMFCIPLVLILGCY). At 238 to 260 (GLIVRALIYKDLDNSPLRRKSIY) the chain is on the cytoplasmic side. Residues 261–284 (LVIIVLTVFAVSYIPFHVMKTMNL) traverse the membrane as a helical segment. ADP-binding positions include 283 to 287 (NLRAR), 303 to 306 (YATY), and Arg-310. Topologically, residues 285–303 (RARLDFQTPEMCDFNDRVY) are extracellular. Residues 304–325 (ATYQVTRGLASLNSCVDPILYF) traverse the membrane as a helical segment. The Cytoplasmic portion of the chain corresponds to 326–373 (LAGDTFRRRLSRATRKASRRSEANLQSKSEEMTLNILSEFKQNGDTSL).

Belongs to the G-protein coupled receptor 1 family. In terms of tissue distribution, expressed in muscle, heart, liver, kidney, lung, brain, spleen, but not in testis.

Its subcellular location is the cell membrane. Receptor for extracellular adenine nucleotides such as ADP. In platelets, binding to ADP leads to mobilization of intracellular calcium ions via activation of phospholipase C, a change in platelet shape, and ultimately platelet aggregation. This is P2Y purinoceptor 1 (P2ry1) from Rattus norvegicus (Rat).